A 71-amino-acid polypeptide reads, in one-letter code: Small ribosomal subunit protein bS18 (71 aa).

This sequence belongs to the bacterial ribosomal protein bS18 family. As to quaternary structure, part of the 30S ribosomal subunit. Forms a tight heterodimer with protein bS6.

Binds as a heterodimer with protein bS6 to the central domain of the 16S rRNA, where it helps stabilize the platform of the 30S subunit. The chain is Small ribosomal subunit protein bS18 from Acaryochloris marina (strain MBIC 11017).